The following is a 90-amino-acid chain: Succinate dehydrogenase subunit 7, mitochondrial (90 aa).

The N-terminal 41 residues, Met1–Arg41, are a transit peptide targeting the mitochondrion.

As to quaternary structure, component of complex II composed of eight subunits in plants: four classical SDH subunits SDH1, SDH2, SDH3 and SDH4 (a flavoprotein (FP), an iron-sulfur protein (IP), and a cytochrome b composed of a large and a small subunit.), as well as four subunits unknown in mitochondria from bacteria and heterotrophic eukaryotes.

The protein resides in the mitochondrion inner membrane. Its pathway is carbohydrate metabolism; tricarboxylic acid cycle. The chain is Succinate dehydrogenase subunit 7, mitochondrial from Oryza sativa subsp. japonica (Rice).